Reading from the N-terminus, the 410-residue chain is Tegument protein VP16 homolog (410 aa).

Residues 388–410 (PPSPSEILPGDPPRPPTCGFLTR) form a disordered region.

It belongs to the herpesviridae tegument protein VP16 protein family. Associates with the VP16-induced complex; binding to host HCFC1 activates VP16 for association with the octamer motif-binding host protein POU2F1, to form a multiprotein-DNA complex responsible for activating transcription of the viral immediate early genes.

The protein localises to the virion tegument. The protein resides in the host nucleus. In terms of biological role, transcriptional activator of immediate-early (IE) gene products (alpha genes). Acts as a key activator of lytic infection by initiating the lytic program through the assembly of the transcriptional regulatory VP16-induced complex composed of VP16 and two cellular factors, HCFC1 and POU2F 1. VP16-induced complex represents a regulatory switch: when it is on, it promotes IE-gene expression and thus lytic infection, and when it is off, it limits IE-gene transcription favoring latent infection. May play a role in the aggregation of tegument proteins around nucleocapsids during virus morphogenesis. This is Tegument protein VP16 homolog from Varicella-zoster virus (strain Oka vaccine) (HHV-3).